The primary structure comprises 418 residues: Voltage-gated ClC-type chloride channel ClcB (418 aa).

Helical transmembrane passes span 5–25, 54–74, 146–166, 168–188, 222–242, 258–278, 291–311, 316–336, 352–372, and 380–400; these read LLIA…FRHA, LLTP…WQKF, LWIA…PLAG, LFIA…PVII, ALII…LTLM, WQLA…PAVW, APPL…AVLA, GAPG…GMLY, LLLG…APIM, and MTGE…ASVI.

It belongs to the chloride channel (TC 2.A.49) family. ClcB subfamily.

It localises to the cell inner membrane. Probably acts as an electrical shunt for an outwardly-directed proton pump that is linked to amino acid decarboxylation, as part of the extreme acid resistance (XAR) response. This is Voltage-gated ClC-type chloride channel ClcB from Escherichia coli (strain ATCC 8739 / DSM 1576 / NBRC 3972 / NCIMB 8545 / WDCM 00012 / Crooks).